Here is a 912-residue protein sequence, read N- to C-terminus: E3 ubiquitin-protein ligase HACE1 (912 aa).

7 ANK repeats span residues 23–55 (LPEDNETAVYTLMPMVMADQHRSVLELLSNSKF), 64–93 (VKRSLLHIAANCGSVECLVLLLKRGADPNY), 97–126 (SGCTPLHLAARNGQKKCMSKLLEYNADVNI), 130–159 (EGLTAIHWLAVNGRTELLHDLVQHVTNVDV), 163–192 (MGQTALHVACQNGHKTTVLCLLDSGADINR), 196–226 (SGATPLYFACSHGQRDTAQILLLRGAKYLPD), and 228–253 (NGVTPLDLCVQGGYGETCDILIQHHP). An HECT domain is found at 577-912 (NCEKLKQGIA…HCGSYGYTMA (336 aa)). Cys879 (glycyl thioester intermediate) is an active-site residue.

It localises to the golgi apparatus. The protein localises to the golgi stack membrane. Its subcellular location is the cytoplasm. It is found in the endoplasmic reticulum. It carries out the reaction S-ubiquitinyl-[E2 ubiquitin-conjugating enzyme]-L-cysteine + [acceptor protein]-L-lysine = [E2 ubiquitin-conjugating enzyme]-L-cysteine + N(6)-ubiquitinyl-[acceptor protein]-L-lysine.. It functions in the pathway protein modification; protein ubiquitination. In terms of biological role, E3 ubiquitin-protein ligase involved in Golgi membrane fusion and regulation of small GTPases. Acts as a regulator of Golgi membrane dynamics during the cell cycle: recruited to Golgi membrane by Rab proteins and regulates postmitotic Golgi membrane fusion. Acts by mediating ubiquitination during mitotic Golgi disassembly, ubiquitination serving as a signal for Golgi reassembly later, after cell division. The sequence is that of E3 ubiquitin-protein ligase HACE1 (hace1) from Xenopus tropicalis (Western clawed frog).